We begin with the raw amino-acid sequence, 226 residues long: Transcription factor bHLH115 (226 aa).

One can recognise a bHLH domain in the interval Thr66 to Ala117.

Homodimer. Interacts with BTS and BHLH47/PYE.

Its subcellular location is the nucleus. The sequence is that of Transcription factor bHLH115 (BHLH115) from Arabidopsis thaliana (Mouse-ear cress).